Consider the following 219-residue polypeptide: Ribose-5-phosphate isomerase A (219 aa).

Residues 28–31 (TGST), 81–84 (DGAD), and 94–97 (KGGG) each bind substrate. E103 acts as the Proton acceptor in catalysis. Residue K121 participates in substrate binding.

This sequence belongs to the ribose 5-phosphate isomerase family. As to quaternary structure, homodimer.

The enzyme catalyses aldehydo-D-ribose 5-phosphate = D-ribulose 5-phosphate. The protein operates within carbohydrate degradation; pentose phosphate pathway; D-ribose 5-phosphate from D-ribulose 5-phosphate (non-oxidative stage): step 1/1. Its function is as follows. Catalyzes the reversible conversion of ribose-5-phosphate to ribulose 5-phosphate. The chain is Ribose-5-phosphate isomerase A from Shewanella sp. (strain ANA-3).